Reading from the N-terminus, the 513-residue chain is Gluconokinase (513 aa).

ATP contacts are provided by residues Lys-16, Thr-261, Gly-300, and 412–416 (GFARS).

Belongs to the FGGY kinase family.

The enzyme catalyses D-gluconate + ATP = 6-phospho-D-gluconate + ADP + H(+). The protein operates within carbohydrate acid metabolism; D-gluconate degradation. With respect to regulation, catabolite repression by gluconate. This is Gluconokinase (gntK) from Bacillus licheniformis.